The following is a 740-amino-acid chain: Putative Pol polyprotein from transposon element Bs1 (740 aa).

The PPR repeat unit spans residues 469-503 (TAVAHNLLVQALFMDGRASDAYVVLEEMQNNGPFP).

In terms of biological role, bs1 is probably an active plant retrotransposon. The sequence is that of Putative Pol polyprotein from transposon element Bs1 from Zea mays (Maize).